The following is a 241-amino-acid chain: uncharacterized protein (241 aa).

A run of 5 helical transmembrane segments spans residues leucine 7–phenylalanine 27, leucine 37–isoleucine 57, isoleucine 72–glycine 92, isoleucine 110–phenylalanine 130, and phenylalanine 138–isoleucine 158.

It localises to the cell membrane. This is an uncharacterized protein from Methanocaldococcus jannaschii (strain ATCC 43067 / DSM 2661 / JAL-1 / JCM 10045 / NBRC 100440) (Methanococcus jannaschii).